A 273-amino-acid polypeptide reads, in one-letter code: Histone H1.2 (273 aa).

The interval 1–63 is disordered; that stretch reads MSIEEENVPT…TKKKTTSSHP (63 aa). The residue at position 2 (serine 2) is an N-acetylserine. Residue serine 14 is modified to Phosphoserine. Over residues 33 to 59 the composition is skewed to basic residues; it reads GKSKKTTTAKATKKPVKAAAPTKKKTT. Residues 61-130 form the H15 domain; that stretch reads SHPTYEEMIK…KVKASFKIPS (70 aa). Glycyl lysine isopeptide (Lys-Gly) (interchain with G-Cter in ubiquitin) cross-links involve residues lysine 156 and lysine 165. Composition is skewed to low complexity over residues 193–216 and 237–256; these read KVTA…VAAK and KKVA…PAKS. Residues 193 to 273 form a disordered region; that stretch reads KVTAAKPKSK…KRASTRKAKK (81 aa). Over residues 257 to 273 the composition is skewed to basic residues; sequence VKVKSPAKRASTRKAKK.

Belongs to the histone H1/H5 family.

The protein localises to the nucleus. It is found in the chromosome. Histones H1 are necessary for the condensation of nucleosome chains into higher-order structures. This is Histone H1.2 from Arabidopsis thaliana (Mouse-ear cress).